The chain runs to 473 residues: Flavin-dependent L-tryptophan oxidase RebO (473 aa).

A signal peptide spans 1–21 (MSRGHKKITVLGAGVAGLVAA). FAD-binding positions include 15 to 16 (VA), 35 to 36 (EG), arginine 43, 61 to 64 (GAMR), glutamate 444, and 451 to 456 (AWIDGA).

It belongs to the flavin monoamine oxidase family. RebO subfamily. As to quaternary structure, homodimer. The cofactor is FAD.

The enzyme catalyses 7-chloro-L-tryptophan + O2 = 3-(7-chloroindol-3-yl)-2-iminopropanoate + H2O2. It carries out the reaction L-tryptophan + O2 = 2-iminio-3-(indol-3-yl)propanoate + H2O2. Involved in the biosynthesis of the indolocarbazole antitumor agent rebeccamycin. It generates the imine form of 7-chloroindole 3-pyruvate (7Cl-IPA) from 7-chloro-L-tryptophan (7Cl-Trp), with concomitant two-electron reduction of O(2) to H(2)O(2). The enzyme is also active with L-tryptophan as substrate. The protein is Flavin-dependent L-tryptophan oxidase RebO (rebO) of Lentzea aerocolonigenes (Lechevalieria aerocolonigenes).